A 362-amino-acid chain; its full sequence is 3-dehydroquinate synthase (362 aa).

NAD(+) contacts are provided by residues D74 to K79, G108 to D112, T132 to T133, K145, and K154. Zn(2+) is bound by residues E187, H250, and H267.

The protein belongs to the sugar phosphate cyclases superfamily. Dehydroquinate synthase family. Requires Co(2+) as cofactor. The cofactor is Zn(2+). NAD(+) is required as a cofactor.

The protein resides in the cytoplasm. The catalysed reaction is 7-phospho-2-dehydro-3-deoxy-D-arabino-heptonate = 3-dehydroquinate + phosphate. The protein operates within metabolic intermediate biosynthesis; chorismate biosynthesis; chorismate from D-erythrose 4-phosphate and phosphoenolpyruvate: step 2/7. Catalyzes the conversion of 3-deoxy-D-arabino-heptulosonate 7-phosphate (DAHP) to dehydroquinate (DHQ). The sequence is that of 3-dehydroquinate synthase from Syntrophotalea carbinolica (strain DSM 2380 / NBRC 103641 / GraBd1) (Pelobacter carbinolicus).